A 175-amino-acid polypeptide reads, in one-letter code: Nucleoside-triphosphatase THEP1 (175 aa).

ATP contacts are provided by residues 8–15 and 99–106; these read GSPGVGKS and LVVIDEIG.

This sequence belongs to the THEP1 NTPase family.

The enzyme catalyses a ribonucleoside 5'-triphosphate + H2O = a ribonucleoside 5'-diphosphate + phosphate + H(+). Has nucleotide phosphatase activity towards ATP, GTP, CTP, TTP and UTP. May hydrolyze nucleoside diphosphates with lower efficiency. This Methanosarcina acetivorans (strain ATCC 35395 / DSM 2834 / JCM 12185 / C2A) protein is Nucleoside-triphosphatase THEP1.